Here is a 195-residue protein sequence, read N- to C-terminus: dITP/XTP pyrophosphatase (195 aa).

A substrate-binding site is contributed by 8–13 (SGNAGK). 2 residues coordinate Mg(2+): E38 and D67. The Proton acceptor role is filled by D67. Substrate is bound by residues S68, 146–149 (FGYD), K169, and 174–175 (HR).

The protein belongs to the HAM1 NTPase family. Homodimer. Mg(2+) is required as a cofactor.

It catalyses the reaction XTP + H2O = XMP + diphosphate + H(+). The enzyme catalyses dITP + H2O = dIMP + diphosphate + H(+). It carries out the reaction ITP + H2O = IMP + diphosphate + H(+). Its function is as follows. Pyrophosphatase that catalyzes the hydrolysis of nucleoside triphosphates to their monophosphate derivatives, with a high preference for the non-canonical purine nucleotides XTP (xanthosine triphosphate), dITP (deoxyinosine triphosphate) and ITP. Seems to function as a house-cleaning enzyme that removes non-canonical purine nucleotides from the nucleotide pool, thus preventing their incorporation into DNA/RNA and avoiding chromosomal lesions. The protein is dITP/XTP pyrophosphatase of Parasynechococcus marenigrum (strain WH8102).